Reading from the N-terminus, the 383-residue chain is 3-dehydroquinate synthase (383 aa).

NAD(+)-binding positions include 81–86 (EGEVSK), 115–119 (GVVGD), 139–140 (TS), Lys-152, and Lys-161. 3 residues coordinate Zn(2+): Glu-194, His-256, and His-274.

It belongs to the sugar phosphate cyclases superfamily. Dehydroquinate synthase family. It depends on Co(2+) as a cofactor. Zn(2+) is required as a cofactor. The cofactor is NAD(+).

It is found in the cytoplasm. It catalyses the reaction 7-phospho-2-dehydro-3-deoxy-D-arabino-heptonate = 3-dehydroquinate + phosphate. The protein operates within metabolic intermediate biosynthesis; chorismate biosynthesis; chorismate from D-erythrose 4-phosphate and phosphoenolpyruvate: step 2/7. Catalyzes the conversion of 3-deoxy-D-arabino-heptulosonate 7-phosphate (DAHP) to dehydroquinate (DHQ). This Nitrobacter winogradskyi (strain ATCC 25391 / DSM 10237 / CIP 104748 / NCIMB 11846 / Nb-255) protein is 3-dehydroquinate synthase.